We begin with the raw amino-acid sequence, 293 residues long: Ribosomal protein L11 methyltransferase (293 aa).

Positions 145, 166, 188, and 230 each coordinate S-adenosyl-L-methionine.

It belongs to the methyltransferase superfamily. PrmA family.

The protein resides in the cytoplasm. It carries out the reaction L-lysyl-[protein] + 3 S-adenosyl-L-methionine = N(6),N(6),N(6)-trimethyl-L-lysyl-[protein] + 3 S-adenosyl-L-homocysteine + 3 H(+). Its function is as follows. Methylates ribosomal protein L11. In Salmonella agona (strain SL483), this protein is Ribosomal protein L11 methyltransferase.